Reading from the N-terminus, the 285-residue chain is Ribonuclease H1 (285 aa).

Positions 72 to 126 (RSSSSPDGSKGQESAHEQKSQAKTSKRPREPLGEGEELPEPGPKHTRQDTEPAAV) are disordered. An RNase H type-1 domain is found at 135-281 (MGESVIVYTD…ADRLAREGAK (147 aa)). Positions 144, 185, 209, and 273 each coordinate Mg(2+).

The protein belongs to the RNase H family. As to quaternary structure, monomer. The cofactor is Mg(2+).

The protein localises to the cytoplasm. The catalysed reaction is Endonucleolytic cleavage to 5'-phosphomonoester.. In the presence of magnesium, manganese is inhibitory. Its function is as follows. Endonuclease that specifically degrades the RNA of RNA-DNA hybrids. Plays a role in RNA polymerase II (RNAp II) transcription termination by degrading R-loop RNA-DNA hybrid formation at G-rich pause sites located downstream of the poly(A) site and behind the elongating RNAp II. This chain is Ribonuclease H1 (Rnaseh1), found in Mus musculus (Mouse).